The sequence spans 872 residues: Alanine--tRNA ligase (872 aa).

The Zn(2+) site is built by His567, His571, Cys669, and His673.

It belongs to the class-II aminoacyl-tRNA synthetase family. Requires Zn(2+) as cofactor.

It is found in the cytoplasm. It carries out the reaction tRNA(Ala) + L-alanine + ATP = L-alanyl-tRNA(Ala) + AMP + diphosphate. In terms of biological role, catalyzes the attachment of alanine to tRNA(Ala) in a two-step reaction: alanine is first activated by ATP to form Ala-AMP and then transferred to the acceptor end of tRNA(Ala). Also edits incorrectly charged Ser-tRNA(Ala) and Gly-tRNA(Ala) via its editing domain. This chain is Alanine--tRNA ligase, found in Streptococcus pneumoniae (strain CGSP14).